Here is a 264-residue protein sequence, read N- to C-terminus: Ubiquinone biosynthesis protein COQ4 homolog, mitochondrial (264 aa).

The transit peptide at 1–26 (MMQRCWQISLPLARRRLIPSLTSKRT) directs the protein to the mitochondrion. H169, D170, H173, and E185 together coordinate Zn(2+).

The protein belongs to the COQ4 family. As to quaternary structure, component of a multi-subunit COQ enzyme complex. Zn(2+) serves as cofactor.

It is found in the mitochondrion inner membrane. The enzyme catalyses a 4-hydroxy-3-methoxy-5-(all-trans-polyprenyl)benzoate + H(+) = a 2-methoxy-6-(all-trans-polyprenyl)phenol + CO2. It participates in cofactor biosynthesis; ubiquinone biosynthesis. Lyase that catalyzes the C1-decarboxylation of 4-hydroxy-3-methoxy-5-(all-trans-polyprenyl)benzoic acid into 2-methoxy-6-(all-trans-polyprenyl)phenol during ubiquinone biosynthesis. This chain is Ubiquinone biosynthesis protein COQ4 homolog, mitochondrial, found in Drosophila grimshawi (Hawaiian fruit fly).